We begin with the raw amino-acid sequence, 103 residues long: Large ribosomal subunit protein bL21 (103 aa).

This sequence belongs to the bacterial ribosomal protein bL21 family. As to quaternary structure, part of the 50S ribosomal subunit. Contacts protein L20.

In terms of biological role, this protein binds to 23S rRNA in the presence of protein L20. The protein is Large ribosomal subunit protein bL21 of Paraburkholderia phymatum (strain DSM 17167 / CIP 108236 / LMG 21445 / STM815) (Burkholderia phymatum).